The chain runs to 343 residues: KRR1 small subunit processome component homolog (343 aa).

The KH domain maps to 126-194; that stretch reads DIIKIGNLVH…VRDIVLETMN (69 aa). Over residues 230 to 246 the composition is skewed to basic residues; the sequence is KNKNISKRKQPKNKKPK. The disordered stretch occupies residues 230–343; sequence KNKNISKRKQ…LMKANKKNRS (114 aa). 2 stretches are compositionally biased toward basic and acidic residues: residues 272–303 and 318–331; these read LNKE…RNKD and RPAE…DALK. Positions 272-341 form a coiled coil; that stretch reads LNKEQKQAKK…AKLMKANKKN (70 aa). Residues 333–343 show a composition bias toward basic residues; that stretch reads KLMKANKKNRS.

The protein belongs to the KRR1 family. In terms of assembly, monomer. Component of the ribosomal small subunit (SSU) processome.

It is found in the nucleus. The protein resides in the nucleolus. Functionally, required for 40S ribosome biogenesis. Involved in nucleolar processing of pre-18S ribosomal RNA and ribosome assembly. Binds to RNA. Required for female germline development, cell viability during eye development and for survival of dividing cells and epithelial cells during early wing disk development. The protein is KRR1 small subunit processome component homolog of Drosophila virilis (Fruit fly).